Consider the following 70-residue polypeptide: MDNIEHRVEELEMKLAFQDGTIEELNQQVIKLNDVVALQQEQLRLLLNKLQSVEPSNMASQADETPPPHY.

The protein belongs to the SlyX family.

The protein is Protein SlyX homolog of Shewanella piezotolerans (strain WP3 / JCM 13877).